Here is a 510-residue protein sequence, read N- to C-terminus: NAD(P)H-quinone oxidoreductase subunit 2 B, chloroplastic (510 aa).

13 helical membrane-spanning segments follow: residues 24–44 (LLLF…GLIL), 57–77 (IPWL…SLLF), 99–119 (IFQF…VEYI), 124–144 (MAIT…MFLC), 149–169 (LITI…LSGY), 183–203 (YLLM…WLYG), 227–247 (PGIS…LSPA), 295–315 (WHLL…LIAI), 323–343 (MLAY…IVGD), 354–374 (YMLF…LFGL), 395–415 (ALSL…AGFF), 418–438 (LYLF…IGLL), and 484–504 (MIVC…IIAI).

Belongs to the complex I subunit 2 family. In terms of assembly, NDH is composed of at least 16 different subunits, 5 of which are encoded in the nucleus.

It is found in the plastid. The protein localises to the chloroplast thylakoid membrane. The enzyme catalyses a plastoquinone + NADH + (n+1) H(+)(in) = a plastoquinol + NAD(+) + n H(+)(out). The catalysed reaction is a plastoquinone + NADPH + (n+1) H(+)(in) = a plastoquinol + NADP(+) + n H(+)(out). In terms of biological role, NDH shuttles electrons from NAD(P)H:plastoquinone, via FMN and iron-sulfur (Fe-S) centers, to quinones in the photosynthetic chain and possibly in a chloroplast respiratory chain. The immediate electron acceptor for the enzyme in this species is believed to be plastoquinone. Couples the redox reaction to proton translocation, and thus conserves the redox energy in a proton gradient. The polypeptide is NAD(P)H-quinone oxidoreductase subunit 2 B, chloroplastic (Lactuca sativa (Garden lettuce)).